The following is a 180-amino-acid chain: ATP-dependent protease subunit HslV (180 aa).

T5 is a catalytic residue. Na(+)-binding residues include G165, C168, and T171.

It belongs to the peptidase T1B family. HslV subfamily. A double ring-shaped homohexamer of HslV is capped on each side by a ring-shaped HslU homohexamer. The assembly of the HslU/HslV complex is dependent on binding of ATP.

It is found in the cytoplasm. It carries out the reaction ATP-dependent cleavage of peptide bonds with broad specificity.. Allosterically activated by HslU binding. In terms of biological role, protease subunit of a proteasome-like degradation complex believed to be a general protein degrading machinery. This is ATP-dependent protease subunit HslV from Helicobacter pylori (strain HPAG1).